We begin with the raw amino-acid sequence, 703 residues long: Elongation factor G 2 (703 aa).

One can recognise a tr-type G domain in the interval 8-291 (ELYRNIGIVA…AVIDYLPAPS (284 aa)). GTP contacts are provided by residues 17–24 (AHVDAGKT), 89–93 (DTPGH), and 143–146 (NKMD).

The protein belongs to the TRAFAC class translation factor GTPase superfamily. Classic translation factor GTPase family. EF-G/EF-2 subfamily.

Its subcellular location is the cytoplasm. In terms of biological role, catalyzes the GTP-dependent ribosomal translocation step during translation elongation. During this step, the ribosome changes from the pre-translocational (PRE) to the post-translocational (POST) state as the newly formed A-site-bound peptidyl-tRNA and P-site-bound deacylated tRNA move to the P and E sites, respectively. Catalyzes the coordinated movement of the two tRNA molecules, the mRNA and conformational changes in the ribosome. In Pseudomonas putida (strain ATCC 47054 / DSM 6125 / CFBP 8728 / NCIMB 11950 / KT2440), this protein is Elongation factor G 2 (fusB).